Consider the following 162-residue polypeptide: MTNFLIVVATVLVMELTAYSVHRWIMHGPLGWGWHKSHHEEHDHALEKNDLYGLVFAVIATVLFTVGWIWAPVLWWIALGMTVYGLIYFVLHDGLVHQRWPFRYIPRKGYARRLYQAHRLHHAVEGRDHCVSFGFIYAPPVDKLKQDLKMSGVLRAEAQERT.

One can recognise a Fatty acid hydroxylase domain in the interval 8 to 135 (VATVLVMELT…GRDHCVSFGF (128 aa)).

Belongs to the sterol desaturase family.

It carries out the reaction all-trans-beta-carotene + 4 reduced [2Fe-2S]-[ferredoxin] + 2 O2 + 4 H(+) = all-trans-zeaxanthin + 4 oxidized [2Fe-2S]-[ferredoxin] + 2 H2O. It participates in carotenoid biosynthesis; astaxanthin biosynthesis. Functionally, catalyzes the hydroxylation reaction from beta-carotene to zeaxanthin via beta-cryptoxanthin. In Paracoccus sp. (strain N81106 / MBIC 01143) (Agrobacterium aurantiacum), this protein is Beta-carotene hydroxylase (crtZ).